A 958-amino-acid polypeptide reads, in one-letter code: Voltage-gated inwardly rectifying potassium channel KCNH6 (958 aa).

Over 1–261 (MPVRRGHVAP…YSPFKAVWDW (261 aa)) the chain is Cytoplasmic. In terms of domain architecture, PAS spans 41-70 (IIYCNDGFCELFGYSRVEVMQQPCTCDFLT). Residues 92-144 (CKVDILYYRKDASSFRCLVDVVPVKNEDGAVIMFILNFEDLAQLLAKCSSRSL) form the PAC domain. The chain crosses the membrane as a helical span at residues 262 to 282 (LILLLVIYTAVFTPYSAAFLL). Over 283-298 (SDQDESRRGACSYTCS) the chain is Extracellular. Residues 299–319 (PLTVVDLIVDIMFVVDIVINF) traverse the membrane as a helical segment. Topologically, residues 320–340 (RTTYVNTNDEVVSHPRRIAVH) are cytoplasmic. Residues 341-361 (YFKGWFLIDMVAAIPFDLLIF) form a helical membrane-spanning segment. The Extracellular portion of the chain corresponds to 362-370 (RTGSDETTT). The chain crosses the membrane as a helical; Voltage-sensor span at residues 371–391 (LIGLLKTARLLRLVRVARKLD). Topologically, residues 392–398 (RYSEYGA) are cytoplasmic. A helical membrane pass occupies residues 399–419 (AVLFLLMCTFALIAHWLACIW). Topologically, residues 420–463 (YAIGNVERPYLEHKIGWLDSLGVQLGKRYNGSDPASGPSVQDKY) are extracellular. N-linked (GlcNAc...) (complex) asparagine glycosylation occurs at N449. The segment at residues 464 to 484 (VTALYFTFSSLTSVGFGNVSP) is an intramembrane region (pore-forming). The short motif at 476 to 481 (SVGFGN) is the Selectivity filter element. The Extracellular segment spans residues 485 to 490 (NTNSEK). The helical transmembrane segment at 491-511 (VFSICVMLIGSLMYASIFGNV) threads the bilayer. Residues 512–958 (SAIIQRLYSG…DPGFAGSWGH (447 aa)) lie on the Cytoplasmic side of the membrane. The segment at 594–694 (AFSGAGKGCL…IQRADLLEVL (101 aa)) is cNMP-binding domain. Disordered regions lie at residues 720–751 (GLHS…PPLS) and 845–910 (TTSP…PPLA). Residues 724-745 (SPRQAPGSQDHQGFFLSDNQSD) are compositionally biased toward polar residues.

Belongs to the potassium channel family. H (Eag) (TC 1.A.1.20) subfamily. Kv11.2/KCNH6 sub-subfamily. As to quaternary structure, the potassium channel is probably composed of a homo- or heterotetrameric complex of pore-forming alpha subunits that can associate only within their subfamily. In terms of tissue distribution, expressed in prolactin-secreting adenomas.

The protein localises to the cell membrane. It catalyses the reaction K(+)(in) = K(+)(out). In terms of biological role, pore-forming (alpha) subunit of voltage-gated inwardly rectifying potassium channel. Characterized by unusual gating kinetics by producing relatively small outward currents during membrane depolarization and large inward currents during subsequent repolarization which reflect a rapid inactivation during depolarization and quick recovery from inactivation but slow deactivation (closing) during repolarization. Activates even more slowly than KCNH2. The chain is Voltage-gated inwardly rectifying potassium channel KCNH6 from Homo sapiens (Human).